The sequence spans 466 residues: Adenosylhomocysteinase (466 aa).

Residues Thr57, Asp132, and Glu192 each contribute to the substrate site. NAD(+) is bound at residue 193–195 (TTT). The substrate site is built by Lys222 and Asp226. Residues Asn227, 256-261 (GYGDVG), Glu279, Asn314, 335-337 (IGH), and Asn380 contribute to the NAD(+) site.

Belongs to the adenosylhomocysteinase family. NAD(+) serves as cofactor.

The protein resides in the cytoplasm. It catalyses the reaction S-adenosyl-L-homocysteine + H2O = L-homocysteine + adenosine. It participates in amino-acid biosynthesis; L-homocysteine biosynthesis; L-homocysteine from S-adenosyl-L-homocysteine: step 1/1. In terms of biological role, may play a key role in the regulation of the intracellular concentration of adenosylhomocysteine. This Rhizobium rhizogenes (strain K84 / ATCC BAA-868) (Agrobacterium radiobacter) protein is Adenosylhomocysteinase.